A 207-amino-acid polypeptide reads, in one-letter code: Thiamine-phosphate synthase (207 aa).

4-amino-2-methyl-5-(diphosphooxymethyl)pyrimidine-binding positions include 41 to 45 (QLRLK) and Asn-73. The Mg(2+) site is built by Asp-74 and Asp-93. Residue Thr-111 participates in 4-amino-2-methyl-5-(diphosphooxymethyl)pyrimidine binding. 138–140 (TKT) provides a ligand contact to 2-[(2R,5Z)-2-carboxy-4-methylthiazol-5(2H)-ylidene]ethyl phosphate. Lys-141 is a binding site for 4-amino-2-methyl-5-(diphosphooxymethyl)pyrimidine. A 2-[(2R,5Z)-2-carboxy-4-methylthiazol-5(2H)-ylidene]ethyl phosphate-binding site is contributed by Gly-168.

This sequence belongs to the thiamine-phosphate synthase family. Mg(2+) serves as cofactor.

It catalyses the reaction 2-[(2R,5Z)-2-carboxy-4-methylthiazol-5(2H)-ylidene]ethyl phosphate + 4-amino-2-methyl-5-(diphosphooxymethyl)pyrimidine + 2 H(+) = thiamine phosphate + CO2 + diphosphate. The enzyme catalyses 2-(2-carboxy-4-methylthiazol-5-yl)ethyl phosphate + 4-amino-2-methyl-5-(diphosphooxymethyl)pyrimidine + 2 H(+) = thiamine phosphate + CO2 + diphosphate. The catalysed reaction is 4-methyl-5-(2-phosphooxyethyl)-thiazole + 4-amino-2-methyl-5-(diphosphooxymethyl)pyrimidine + H(+) = thiamine phosphate + diphosphate. The protein operates within cofactor biosynthesis; thiamine diphosphate biosynthesis; thiamine phosphate from 4-amino-2-methyl-5-diphosphomethylpyrimidine and 4-methyl-5-(2-phosphoethyl)-thiazole: step 1/1. Condenses 4-methyl-5-(beta-hydroxyethyl)thiazole monophosphate (THZ-P) and 2-methyl-4-amino-5-hydroxymethyl pyrimidine pyrophosphate (HMP-PP) to form thiamine monophosphate (TMP). The chain is Thiamine-phosphate synthase from Pelagibacter ubique (strain HTCC1062).